Here is a 559-residue protein sequence, read N- to C-terminus: Sporulation protein kinase mde3 (559 aa).

A Protein kinase domain is found at 21–323 (YLVKQKLGDG…TAKYCKEVFF (303 aa)). Residues 27-35 (LGDGSFGTV) and K53 each bind ATP. D150 acts as the Proton acceptor in catalysis.

The protein belongs to the protein kinase superfamily. Ser/Thr protein kinase family.

The catalysed reaction is L-seryl-[protein] + ATP = O-phospho-L-seryl-[protein] + ADP + H(+). The enzyme catalyses L-threonyl-[protein] + ATP = O-phospho-L-threonyl-[protein] + ADP + H(+). Functionally, protein kinase which is essential for spore formation. The chain is Sporulation protein kinase mde3 (mde3) from Schizosaccharomyces pombe (strain 972 / ATCC 24843) (Fission yeast).